Here is a 416-residue protein sequence, read N- to C-terminus: UDP-N-acetylglucosamine 1-carboxyvinyltransferase (416 aa).

22-23 (KN) contacts phosphoenolpyruvate. Arg92 contacts UDP-N-acetyl-alpha-D-glucosamine. Cys116 acts as the Proton donor in catalysis. A 2-(S-cysteinyl)pyruvic acid O-phosphothioketal modification is found at Cys116. UDP-N-acetyl-alpha-D-glucosamine is bound by residues 121-125 (RPVDQ), Asp304, and Ile326.

This sequence belongs to the EPSP synthase family. MurA subfamily.

It is found in the cytoplasm. It carries out the reaction phosphoenolpyruvate + UDP-N-acetyl-alpha-D-glucosamine = UDP-N-acetyl-3-O-(1-carboxyvinyl)-alpha-D-glucosamine + phosphate. Its pathway is cell wall biogenesis; peptidoglycan biosynthesis. Functionally, cell wall formation. Adds enolpyruvyl to UDP-N-acetylglucosamine. The protein is UDP-N-acetylglucosamine 1-carboxyvinyltransferase of Cupriavidus necator (strain ATCC 17699 / DSM 428 / KCTC 22496 / NCIMB 10442 / H16 / Stanier 337) (Ralstonia eutropha).